The sequence spans 194 residues: Peptidyl-tRNA hydrolase (194 aa).

Tyr17 is a tRNA binding site. His22 acts as the Proton acceptor in catalysis. Positions 68, 70, and 116 each coordinate tRNA.

This sequence belongs to the PTH family. As to quaternary structure, monomer.

Its subcellular location is the cytoplasm. The catalysed reaction is an N-acyl-L-alpha-aminoacyl-tRNA + H2O = an N-acyl-L-amino acid + a tRNA + H(+). Functionally, hydrolyzes ribosome-free peptidyl-tRNAs (with 1 or more amino acids incorporated), which drop off the ribosome during protein synthesis, or as a result of ribosome stalling. Its function is as follows. Catalyzes the release of premature peptidyl moieties from peptidyl-tRNA molecules trapped in stalled 50S ribosomal subunits, and thus maintains levels of free tRNAs and 50S ribosomes. In Shewanella halifaxensis (strain HAW-EB4), this protein is Peptidyl-tRNA hydrolase.